The sequence spans 509 residues: Solute carrier family 2, facilitated glucose transporter member 4 (509 aa).

Over 1–24 (MPSGFQQIGSEDGEPPRQRVTGTL) the chain is Cytoplasmic. The tract at residues 7–13 (QIGSEDG) is interaction with SRFBP1. Position 10 is a phosphoserine (serine 10). The chain crosses the membrane as a helical span at residues 25 to 45 (VLAVFSAVLGSLQFGYNIGVI). Residues 46-81 (NAPQKVIEQSYNETWLGRQGPEGPGSIPPGTLTTLW) lie on the Extracellular side of the membrane. Residue asparagine 57 is glycosylated (N-linked (GlcNAc...) asparagine). The chain crosses the membrane as a helical span at residues 82–102 (ALSVAIFSVGGMISSFLIGII). Over 103–111 (SQWLGRKRA) the chain is Cytoplasmic. A helical transmembrane segment spans residues 112 to 132 (MLFNNALAVLGGTLMGLAKAA). Over 133–142 (ASYEMLILGR) the chain is Extracellular. The helical transmembrane segment at 143 to 163 (FFIGAYSGLTSGLVPMYVGEI) threads the bilayer. Over 164–171 (APTHLRGA) the chain is Cytoplasmic. Residues 172–192 (LGTLNQLAIVTGILIAQVLGL) traverse the membrane as a helical segment. D-glucose is bound at residue glutamine 177. At 193 to 200 (ESMLGTAT) the chain is on the extracellular side. A helical membrane pass occupies residues 201–221 (LWPLLLGITVLPALLQMVLLP). Residues 222 to 287 (LCPESPRYLY…LLGSHTHRQP (66 aa)) lie on the Cytoplasmic side of the membrane. Residue cysteine 223 is the site of S-palmitoyl cysteine attachment. Phosphoserine; by SGK1 is present on serine 274. Residues 288 to 308 (LVIAIVLQLSQQLSGINAVFY) form a helical membrane-spanning segment. Residues 298 to 299 (QQ) and asparagine 304 contribute to the D-glucose site. Residues 309–323 (YSTSIFESAGVEKPA) are Extracellular-facing. Residues 324–344 (YATIGAGVVNTVFTLVSVFLV) form a helical membrane-spanning segment. Asparagine 333 is a D-glucose binding site. The Cytoplasmic portion of the chain corresponds to 345 to 353 (ERAGRRTLH). A helical transmembrane segment spans residues 354–374 (LLGLAGMCGCAILMTVALLLL). At 375 to 384 (ERVPAMSYVS) the chain is on the extracellular side. The chain crosses the membrane as a helical span at residues 385-405 (IVAIFGFVAFFEIGPGPIPWF). Glutamate 396 and tryptophan 404 together coordinate D-glucose. At 406–417 (IVAELFSQGPRP) the chain is on the cytoplasmic side. A helical transmembrane segment spans residues 418–438 (AAMAVAGFSNWTCNFIIGMGF). The Extracellular segment spans residues 439–445 (QYVADAM). A helical transmembrane segment spans residues 446–466 (GPYVFLLFAVLLLGFFIFTFL). Topologically, residues 467 to 509 (KVPETRGRTFDQISAVFHRTPSLLEQEVKPSTELEYLGPDEHD) are cytoplasmic. The residue at position 486 (threonine 486) is a Phosphothreonine. Phosphoserine is present on serine 488. The Dileucine internalization motif motif lies at 489-490 (LL).

The protein belongs to the major facilitator superfamily. Sugar transporter (TC 2.A.1.1) family. Glucose transporter subfamily. Binds to DAXX. Interacts via its N-terminus with SRFBP1. Interacts with NDUFA9. Interacts with TRARG1; the interaction is required for proper SLC2A4 recycling after insulin stimulation. Sumoylated. In terms of processing, palmitoylated. Palmitoylation by ZDHHC7 controls the insulin-dependent translocation of GLUT4 to the plasma membrane.

The protein localises to the cell membrane. It is found in the endomembrane system. It localises to the cytoplasm. The protein resides in the perinuclear region. It carries out the reaction D-glucose(out) = D-glucose(in). Its function is as follows. Insulin-regulated facilitative glucose transporter, which plays a key role in removal of glucose from circulation. Response to insulin is regulated by its intracellular localization: in the absence of insulin, it is efficiently retained intracellularly within storage compartments in muscle and fat cells. Upon insulin stimulation, translocates from these compartments to the cell surface where it transports glucose from the extracellular milieu into the cell. This chain is Solute carrier family 2, facilitated glucose transporter member 4, found in Bos taurus (Bovine).